A 1108-amino-acid polypeptide reads, in one-letter code: Retinal guanylyl cyclase 2 (1108 aa).

Residues 1 to 50 (MFLGPWPFSRLLSWFAISSRLSGQHGLPSSKFLRCLCLLALLPLLRWGQA) form the signal peptide. Residues 51–469 (LPYKIGVIGP…CQGGIDPALA (419 aa)) lie on the Extracellular side of the membrane. Cys-104 and Cys-132 are joined by a disulfide. The chain crosses the membrane as a helical span at residues 470–490 (MMVCFALLIALLSINGFAYFI). Topologically, residues 491-1108 (RRRINKIQLI…AERQLVRNKP (618 aa)) are cytoplasmic. The Protein kinase domain occupies 532 to 812 (FQIISEVQSG…DEIFNQFKTF (281 aa)). Residues 884 to 1014 (TLYFSDIVGF…DTVNTASRME (131 aa)) enclose the Guanylate cyclase domain.

It belongs to the adenylyl cyclase class-4/guanylyl cyclase family. Homodimer. Interacts with RD3; promotes the exit of GUCY2F from the endoplasmic reticulum and its trafficking to the photoreceptor outer segments. There are 9 conserved cysteine residues in sensory guanylate cyclases, 6 in the extracellular domain, which may be involved in intra- or interchain disulfide bonds. In terms of tissue distribution, retina.

The protein resides in the membrane. It localises to the photoreceptor outer segment membrane. The catalysed reaction is GTP = 3',5'-cyclic GMP + diphosphate. With respect to regulation, activated by GUCA1B when free calcium ions concentration is low, and inhibited by GUCA1B when free calcium ions concentration is high. Inhibited by RD3. In terms of biological role, responsible for the synthesis of cyclic GMP (cGMP) in rods and cones of photoreceptors. Plays an essential role in phototransduction, by mediating cGMP replenishment. May also participate in the trafficking of membrane-asociated proteins to the photoreceptor outer segment membrane. This chain is Retinal guanylyl cyclase 2, found in Mus musculus (Mouse).